The primary structure comprises 61 residues: MAKSKNHTAHNQSAKAHKNGIKKPRRHRHTPTRGMDPKFLRNQRYARKHNVKSGENAGVEE.

Residues 1–61 form a disordered region; sequence MAKSKNHTAH…KSGENAGVEE (61 aa). A compositionally biased stretch (basic residues) spans 15–31; the sequence is KAHKNGIKKPRRHRHTP.

The protein belongs to the eukaryotic ribosomal protein eL29 family.

The protein is Large ribosomal subunit protein eL29y (RPL29B) of Arabidopsis thaliana (Mouse-ear cress).